A 534-amino-acid polypeptide reads, in one-letter code: MLQQLLITLPTEASTWVKLRHPKAATERVALWEDVTKMFKAEALLSQDADETQGESLESRVTLGSLTAESQELLTFKDVSVDFTQEEWGQLAPAHRNLYREVMLENYGNLVSVGCQLSKPGVISQLEKGEEPWLMERDISGVPSSDLKSKTKTKESALQNDISWEELHCGLMMERFTKGSSMYSTLGRISKCNKLESQQENQRMGKGQIPLMCKKTFTQERGQESNRFEKRINVKSEVMPGPIGLPRKRDRKYDTPGKRSRYNIDLVNHSRSYTKMKTFECNICEKIFKQLIHLTEHMRIHTGEKPFRCKECGKAFSQSSSLIPHQRIHTGEKPYECKECGKTFRHPSSLTQHVRIHTGEKPYECRVCEKAFSQSIGLIQHLRTHVREKPFTCKDCGKAFFQIRHLRQHEIIHTGVKPYICNVCSKTFSHSTYLTQHQRTHTGERPYKCKECGKAFSQRIHLSIHQRVHTGVKPYECSHCGKAFRHDSSFAKHQRIHTGEKPYDCNECGKAFSCSSSLIRHCKTHLRNTFSNVV.

Glycyl lysine isopeptide (Lys-Gly) (interchain with G-Cter in SUMO2) cross-links involve residues Lys37 and Lys40. Residues 74 to 145 form the KRAB domain; the sequence is LTFKDVSVDF…ERDISGVPSS (72 aa). Glycyl lysine isopeptide (Lys-Gly) (interchain with G-Cter in SUMO2) cross-links involve residues Lys178 and Lys235. 9 C2H2-type zinc fingers span residues 279–301, 307–329, 335–357, 363–385, 391–413, 419–441, 447–469, 475–497, and 503–525; these read FECN…MRIH, FRCK…QRIH, YECK…VRIH, YECR…LRTH, FTCK…EIIH, YICN…QRTH, YKCK…QRVH, YECS…QRIH, and YDCN…CKTH.

This sequence belongs to the krueppel C2H2-type zinc-finger protein family.

It localises to the nucleus. Functionally, may be involved in transcriptional regulation. Essential for Golgi structural integrity. The chain is Zinc finger protein 69 homolog B (ZFP69B) from Homo sapiens (Human).